The primary structure comprises 744 residues: Tripartite motif-containing protein 2 (744 aa).

At S10 the chain carries Phosphoserine. The RING-type zinc finger occupies 23-64 (CSICLERYKNPKVLPCLHTFCERCLQNYIPAHSLTLSCPVCR). The segment at 113 to 154 (GKPLSCPNHDGNVMDFYCQSCETAMCRECTEGEHAEHPTVPL) adopts a B box-type zinc-finger fold. Residues C118, H121, C141, and H146 each coordinate Zn(2+). Residues 320–421 (TTNAVASETV…IRGSPFKLKV (102 aa)) form a Filamin repeat. Residue T371 is modified to Phosphothreonine. S375, S424, and S428 each carry phosphoserine. The interval 432–462 (EGVKRRVKSPGSGHVKQKAVKRPASMYSTGK) is disordered. NHL repeat units lie at residues 473–516 (IFRV…FSND), 520–563 (KSRF…FSSD), 564–605 (GKFK…FQPN), 609–652 (VTRF…FNQE), 656–699 (MLKF…FDGS), and 700–743 (GSFL…YRYL).

This sequence belongs to the TRIM/RBCC family. As to quaternary structure, forms homooligomers. Interacts with TRIM3; this interaction reduces TRIM2 activity. Interacts with myosin V; myosin V may not be a substrate for ubiquitination. Interacts with NEFL. Interacts with phosphorylated BCL2L11. Interacts with SIRPA. RING-type zinc finger-dependent and UBE2D1-dependent autoubiquitination.

The protein localises to the cytoplasm. The catalysed reaction is S-ubiquitinyl-[E2 ubiquitin-conjugating enzyme]-L-cysteine + [acceptor protein]-L-lysine = [E2 ubiquitin-conjugating enzyme]-L-cysteine + N(6)-ubiquitinyl-[acceptor protein]-L-lysine.. The protein operates within protein modification; protein ubiquitination. UBE2D1-dependent E3 ubiquitin-protein ligase that mediates the ubiquitination of NEFL and of phosphorylated BCL2L11. Plays a neuroprotective function. May play a role in neuronal rapid ischemic tolerance. Plays a role in antiviral immunity and limits New World arenavirus infection independently of its ubiquitin ligase activity. The protein is Tripartite motif-containing protein 2 (TRIM2) of Bos taurus (Bovine).